A 391-amino-acid polypeptide reads, in one-letter code: uncharacterized protein (391 aa).

One can recognise a Flavodoxin-like domain in the interval 247-387 (AVIVYATIYS…KIKEFGRKLA (141 aa)).

This is an uncharacterized protein from Methanocaldococcus jannaschii (strain ATCC 43067 / DSM 2661 / JAL-1 / JCM 10045 / NBRC 100440) (Methanococcus jannaschii).